The chain runs to 570 residues: MSEKHPGPLVVEGKLTDAERMKLESNYLRGTIAEDLNDGLTGGFKGDNVLLIRFHGMYQQDDRDIRAERAEQKLEPRHAMLLRCRLPGGVITTKQWQAIDKFAGENTIYGSIRLTNRQTFQFHGILKKNVKPVHQMLHSVGLDALATANDMNRNVLCTSNPYESQLHAEAYEWAKKISEHLLPRTRAYAEIWLDQEKVATTDEEPILGQTYLPRKFKTTVVIPPQNDIDLHANDMNFVAIAENGKLVGFNLLVGGGLSIEHGNKKTYARAASEFGYLPLEHTLAVAEAVVTTQRDWGNRTDRKNAKTKYTLERVGVETFKAEVERRAGIKFEPIRPYEFTGRGDRIGWVKGIDDNWHLTLFIENGRILDYPGRPLKTGLLEIAKIHKGDFRITANQNLIIAGVPESEKAKIEKIAKESGLMNAVTPQRENSMACVSFPTCPLAMAEAERFLPSFIDNIDNLMAKHGVSDEHIVMRVTGCPNGCGRAMLAEVGLVGKAPGRYNLHLGGNRIGTRIPRMYKENITEPEILASLDELIERWAKEREAGEGFGDFTVRAGIIRPVLDPARDLWD.

The [4Fe-4S] cluster site is built by C434, C440, C479, and C483. C483 contributes to the siroheme binding site.

Belongs to the nitrite and sulfite reductase 4Fe-4S domain family. In terms of assembly, alpha(8)-beta(8). The alpha component is a flavoprotein, the beta component is a hemoprotein. Siroheme is required as a cofactor. [4Fe-4S] cluster serves as cofactor.

It carries out the reaction hydrogen sulfide + 3 NADP(+) + 3 H2O = sulfite + 3 NADPH + 4 H(+). Its pathway is sulfur metabolism; hydrogen sulfide biosynthesis; hydrogen sulfide from sulfite (NADPH route): step 1/1. Component of the sulfite reductase complex that catalyzes the 6-electron reduction of sulfite to sulfide. This is one of several activities required for the biosynthesis of L-cysteine from sulfate. This chain is Sulfite reductase [NADPH] hemoprotein beta-component, found in Shigella dysenteriae serotype 1 (strain Sd197).